The sequence spans 539 residues: Alpha-aminoadipic semialdehyde dehydrogenase (539 aa).

The transit peptide at Met1 to Ala26 directs the protein to the mitochondrion. 3 positions are modified to N6-acetyllysine; alternate: Lys86, Lys94, and Lys97. Residues Lys86, Lys94, and Lys97 each carry the N6-succinyllysine; alternate modification. NAD(+) contacts are provided by residues Thr192–Phe194, Lys218, Gly258–Thr259, Gly274–Ser275, Gly274–Gly279, and Glu296–Leu297. Glu296 acts as the Proton acceptor in catalysis. Residue Cys330 is the Nucleophile of the active site. Thr331 contacts (S)-2-amino-6-oxohexanoate. Residue Glu427 participates in NAD(+) binding. The residue at position 462 (Lys462) is an N6-acetyllysine. (S)-2-amino-6-oxohexanoate contacts are provided by Gly489 and Ala490. Lys500 carries the post-translational modification N6-acetyllysine. At Lys537 the chain carries N6-succinyllysine.

This sequence belongs to the aldehyde dehydrogenase family. As to quaternary structure, homotetramer. As to expression, abundant in kidney, liver, cochlea and outer hair cells but not inner hair cells or vestibular type I hair cells. Very low levels in lung, brain, intestine and pancreas.

It localises to the cytoplasm. The protein localises to the cytosol. The protein resides in the nucleus. Its subcellular location is the mitochondrion. The enzyme catalyses nonanal + NAD(+) + H2O = nonanoate + NADH + 2 H(+). It catalyses the reaction (S)-2-amino-6-oxohexanoate + NAD(+) + H2O = L-2-aminoadipate + NADH + 2 H(+). It carries out the reaction betaine aldehyde + NAD(+) + H2O = glycine betaine + NADH + 2 H(+). The catalysed reaction is an aldehyde + NAD(+) + H2O = a carboxylate + NADH + 2 H(+). The enzyme catalyses hexanal + NAD(+) + H2O = hexanoate + NADH + 2 H(+). It catalyses the reaction octanal + NAD(+) + H2O = octanoate + NADH + 2 H(+). It carries out the reaction (E)-non-2-enal + NAD(+) + H2O = (E)-non-2-enoate + NADH + 2 H(+). The catalysed reaction is (E)-4-hydroxynon-2-enal + NAD(+) + H2O = (E)-4-hydroxynon-2-enoate + NADH + 2 H(+). The protein operates within amine and polyamine biosynthesis; betaine biosynthesis via choline pathway; betaine from betaine aldehyde: step 1/1. Functionally, multifunctional enzyme mediating important protective effects. Metabolizes betaine aldehyde to betaine, an important cellular osmolyte and methyl donor. Protects cells from oxidative stress by metabolizing a number of lipid peroxidation-derived aldehydes. Involved in lysine catabolism. This is Alpha-aminoadipic semialdehyde dehydrogenase from Rattus norvegicus (Rat).